The primary structure comprises 407 residues: MDTLLERFLRYVTFHTRSDATNPACPSSEGQLIFARALRDEMEQMGLTLVTLDEHGYLTACLPGNQPDAPAIGLIAHMDTADYAAEQVVPQIIESYQGGDICLGKGDEVLAIRQYRCLKNYLGQDLITTDGSTLLGADDKAGIAEILTAIDYLLAHPDIPRGDLWVGLTPDEEIGRGADLFPLDRFPAKWAYTVDGGELGELEYENFNAASATVRITGNNVHPGTAKGSMINSQTLAARFHAAMPPEQTPECTDGYEGFFHLAQMSGTVEESTLHYIIRDFDDDAFAARKAQLKERVASLQLDAPKARIELTLTDSYRNMRSQIEPHMHIVELARAAMLAADVVPKIKPIRGGTDGARLSFMGLPCPNLFTGGHNFHGKHEFIPLQSMEKAVATLVALVRLTSAWRG.

His-77 contacts Zn(2+). Asp-79 is a catalytic residue. Residue Asp-138 participates in Zn(2+) binding. Glu-172 serves as the catalytic Proton acceptor. Glu-173, Asp-195, and His-377 together coordinate Zn(2+).

This sequence belongs to the peptidase M20B family. Requires Zn(2+) as cofactor.

The protein resides in the cytoplasm. The enzyme catalyses Release of the N-terminal residue from a tripeptide.. In terms of biological role, cleaves the N-terminal amino acid of tripeptides. This chain is Peptidase T, found in Aeromonas salmonicida (strain A449).